A 604-amino-acid polypeptide reads, in one-letter code: Prostaglandin G/H synthase 2 (604 aa).

An N-terminal signal peptide occupies residues 1 to 17 (MLARALLLCAVLALSHT). One can recognise an EGF-like domain in the interval 18 to 55 (ANPCCSHPCQNRGVCMSVGFDQYKCDCTRTGFYGENCS). 4 disulfides stabilise this stretch: Cys-21-Cys-32, Cys-22-Cys-145, Cys-26-Cys-42, and Cys-44-Cys-54. An N-linked (GlcNAc...) asparagine glycan is attached at Asn-53. Position 106 (Arg-106) interacts with substrate. N-linked (GlcNAc...) asparagine glycosylation occurs at Asn-130. The Proton acceptor role is filled by His-193. Tyr-341 serves as a coordination point for substrate. Residue Tyr-371 is the For cyclooxygenase activity of the active site. His-374 lines the heme b pocket. Residue Asn-396 is glycosylated (N-linked (GlcNAc...) asparagine). S-nitrosocysteine is present on Cys-526. Cys-555 and Cys-561 are disulfide-bonded. Residue Ser-565 is modified to O-acetylserine. N-linked (GlcNAc...) asparagine glycosylation is present at Asn-580.

The protein belongs to the prostaglandin G/H synthase family. In terms of assembly, homodimer. Requires heme b as cofactor. Post-translationally, S-nitrosylation by NOS2 (iNOS) activates enzyme activity. S-nitrosylation may take place on different Cys residues in addition to Cys-526. In terms of processing, acetylated at Ser-565 by SPHK1. During neuroinflammation, acetylation by SPHK1 promotes neuronal secretion of specialized preresolving mediators (SPMs), especially 15-R-lipoxin A4, which results in an increase of phagocytic microglia.

It localises to the microsome membrane. The protein resides in the endoplasmic reticulum membrane. It is found in the nucleus inner membrane. The protein localises to the nucleus outer membrane. The enzyme catalyses (5Z,8Z,11Z,14Z)-eicosatetraenoate + AH2 + 2 O2 = prostaglandin H2 + A + H2O. The catalysed reaction is (5Z,8Z,11Z,14Z)-eicosatetraenoate + 2 O2 = prostaglandin G2. It carries out the reaction prostaglandin G2 + AH2 = prostaglandin H2 + A + H2O. It catalyses the reaction (5Z,8Z,11Z,14Z,17Z)-eicosapentaenoate + 2 O2 = prostaglandin G3. The enzyme catalyses prostaglandin G3 + AH2 = prostaglandin H3 + A + H2O. The catalysed reaction is (8Z,11Z,14Z)-eicosatrienoate + 2 O2 = prostaglandin G1. It carries out the reaction prostaglandin G1 + AH2 = prostaglandin H1 + A + H2O. It catalyses the reaction 2-(5Z,8Z,11Z,14Z)-eicosatetraenoyl-sn-glycero-3-phosphoethanolamine + 2 O2 = 2-(prostaglandin G2)-sn-glycero-3-phosphoethanolamine. The enzyme catalyses 2-(prostaglandin G2)-sn-glycero-3-phosphoethanolamine + AH2 = 2-(prostaglandin H2)-sn-glycero-3-phosphoethanolamine + A + H2O. The catalysed reaction is 2-(5Z,8Z,11Z,14Z)-eicosatetraenoyl-sn-glycero-3-phosphocholine + 2 O2 = 2-(prostaglandin G2)-sn-glycero-3-phosphocholine. It carries out the reaction 2-(prostaglandin G2)-sn-glycero-3-phosphocholine + AH2 = 2-(prostaglandin H2)-sn-glycero-3-phosphocholine + A + H2O. It catalyses the reaction (15S)-hydroperoxy-(5Z,8Z,11Z,13E)-eicosatetraenoate + AH2 = (15S)-hydroxy-(5Z,8Z,11Z,13E)-eicosatetraenoate + A + H2O. The enzyme catalyses 2-(5Z,8Z,11Z,14Z)-eicosatetraenoyl-sn-glycero-3-phosphocholine + AH2 + O2 = 2-[(15S)-hydroxy-(5Z,8Z,11Z,13E)-eicosatetraenoyl]-sn-glycero-3-phosphocholine + A + H2O. The catalysed reaction is 2-(5Z,8Z,11Z,14Z)-eicosatetraenoyl-sn-glycero-3-phosphocholine + AH2 + O2 = 2-[(15R)-hydroxy-(5Z,8Z,11Z,13E)-eicosatetraenoyl]-sn-glycero-3-phosphocholine + A + H2O. It carries out the reaction 2-(5Z,8Z,11Z,14Z)-eicosatetraenoyl-sn-glycero-3-phosphocholine + AH2 + O2 = 2-[(11R)-hydroxy-(5Z,8Z,12E,14Z)-eicosatetraenoyl]-sn-glycero-3-phosphocholine + A + H2O. It catalyses the reaction (9Z,12Z)-octadecadienoate + AH2 + O2 = 9-hydroxy-(10E,12Z)-octadecadienoate + A + H2O. The enzyme catalyses (9Z,12Z)-octadecadienoate + AH2 + O2 = 13-hydroxy-(9Z,11E)-octadecadienoate + A + H2O. The catalysed reaction is (5Z,8Z,11Z,14Z)-eicosatetraenoate + AH2 + O2 = (15R)-hydroxy-(5Z,8Z,11Z,13E)-eicosatetraenoate + A + H2O. It carries out the reaction (5Z,8Z,11Z,14Z)-eicosatetraenoate + AH2 + O2 = (11R)-hydroxy-(5Z,8Z,12E,14Z)-eicosatetraenoate + A + H2O. It catalyses the reaction (5Z,8Z,11Z,14Z,17Z)-eicosapentaenoate + AH2 + O2 = (11R)-hydroxy-(5Z,8Z,12E,14Z,17Z)-eicosapentaenoate + A + H2O. The enzyme catalyses (5Z,8Z,11Z,14Z,17Z)-eicosapentaenoate + AH2 + O2 = (18S)-hydroxy-(5Z,8Z,11Z,14Z,16E)-eicosapentaenoate + A + H2O. The catalysed reaction is (5Z,8Z,11Z,14Z,17Z)-eicosapentaenoate + AH2 + O2 = (18R)-hydroxy-(5Z,8Z,11Z,14Z,16E)-eicosapentaenoate + A + H2O. It carries out the reaction (5Z,8Z,11Z,14Z,17Z)-eicosapentaenoate + AH2 + O2 = (15R)-hydroxy-(5Z,8Z,11Z,13E,17Z)-eicosapentaenoate + A + H2O. It catalyses the reaction (5Z,8Z,11Z,14Z,17Z)-eicosapentaenoate + AH2 + O2 = (15S)-hydroxy-(5Z,8Z,11Z,13E,17Z)-eicosapentaenoate + A + H2O. The enzyme catalyses (7Z,10Z,13Z,16Z,19Z)-docosapentaenoate + AH2 + O2 = 13R-hydroxy-(7Z,10Z,14E,16Z,19Z)-docosapentaenoate + A + H2O. The catalysed reaction is (4Z,7Z,10Z,13Z,16Z,19Z)-docosahexaenoate + AH2 + O2 = 13-hydroxy-(4Z,7Z,10Z,14E,16Z,19Z)-docosahexaenoate + A + H2O. It carries out the reaction (5S)-hydroxy-(6E,8Z,11Z,14Z)-eicosatetraenoate + AH2 + O2 = (5S,15R)-dihydroxy-(6E,8Z,11Z,13E)-eicosatetraenoate + A + H2O. It catalyses the reaction (4Z,7Z,10Z,13Z,16Z,19Z)-docosahexaenoate + AH2 + O2 = 17R-hydroxy-(4Z,7Z,10Z,13Z,15E,19Z)-docosahexaenoate + A + H2O. The enzyme catalyses (5S)-hydroxy-(6E,8Z,11Z,14Z)-eicosatetraenoate + AH2 + O2 = (5S,15S)-dihydroxy-(6E,8Z,11Z,13E)-eicosatetraenoate + A + H2O. The catalysed reaction is (5S)-hydroxy-(6E,8Z,11Z,14Z)-eicosatetraenoate + AH2 + O2 = (5S,11R)-dihydroxy-(6E,8Z,12E,14Z)-eicosatetraenoate + A + H2O. It carries out the reaction 2-(5Z,8Z,11Z,14Z-eicosatetraenoyl)-glycerol + 2 O2 = 2-glyceryl-prostaglandin G2. It catalyses the reaction 2-glyceryl-prostaglandin G2 + AH2 = 2-glyceryl-prostaglandin H2 + A + H2O. The enzyme catalyses (5Z,8Z,11Z,14Z)-eicosatetraenoate + O2 = (15R)-hydroperoxy-(5Z,8Z,11Z,13E)-eicosatetraenoate. The catalysed reaction is (5Z,8Z,11Z,14Z)-eicosatetraenoate + O2 = 11R-hydroperoxy-(5Z,8Z,12E,14Z)-eicosatetraenoate. It carries out the reaction (9Z,12Z)-octadecadienoate + AH2 + O2 = (9R)-hydroxy-(10E,12Z)-octadecadienoate + A + H2O. It catalyses the reaction (9Z,12Z)-octadecadienoate + AH2 + O2 = (9S)-hydroxy-(10E,12Z)-octadecadienoate + A + H2O. The enzyme catalyses (9Z,12Z)-octadecadienoate + AH2 + O2 = (13S)-hydroxy-(9Z,11E)-octadecadienoate + A + H2O. The catalysed reaction is (9Z,12Z)-octadecadienoate + AH2 + O2 = (13R)-hydroxy-(9Z,11E)-octadecadienoate + A + H2O. The protein operates within lipid metabolism; prostaglandin biosynthesis. The cyclooxygenase activity is inhibited by nonsteroidal anti-inflammatory drugs (NSAIDs) including aspirin, ibuprofen, flurbiprofen, celecoxib, flufenamic, mefenamic and tolfenamic acids as well as by hydroperoxide scavenger erythrocyte glutathione peroxidase GPX1. Aspirin triggers enzyme acetylation turning off its ability to generate pro-inflammatory prostaglandins, but switches on its capacity to produce anti-inflammatory lipid mediators involved in inflammation resolution. Aspirin enhances lipoxygenase-type activity toward production of epimers with R stereochemistry such as 15R-HETE, 18R-HEPE, 15R-HEPE and 17R-HDHA. Atorvastatin, a cholesterol-lowering drug, triggers enzyme S-nitrosylation increasing production of 13-series resolvins (RvTs). Its function is as follows. Dual cyclooxygenase and peroxidase in the biosynthesis pathway of prostanoids, a class of C20 oxylipins mainly derived from arachidonate ((5Z,8Z,11Z,14Z)-eicosatetraenoate, AA, C20:4(n-6)), with a particular role in the inflammatory response. The cyclooxygenase activity oxygenates AA to the hydroperoxy endoperoxide prostaglandin G2 (PGG2), and the peroxidase activity reduces PGG2 to the hydroxy endoperoxide prostaglandin H2 (PGH2), the precursor of all 2-series prostaglandins and thromboxanes. This complex transformation is initiated by abstraction of hydrogen at carbon 13 (with S-stereochemistry), followed by insertion of molecular O2 to form the endoperoxide bridge between carbon 9 and 11 that defines prostaglandins. The insertion of a second molecule of O2 (bis-oxygenase activity) yields a hydroperoxy group in PGG2 that is then reduced to PGH2 by two electrons. Similarly catalyzes successive cyclooxygenation and peroxidation of dihomo-gamma-linoleate (DGLA, C20:3(n-6)) and eicosapentaenoate (EPA, C20:5(n-3)) to corresponding PGH1 and PGH3, the precursors of 1- and 3-series prostaglandins. In an alternative pathway of prostanoid biosynthesis, converts 2-arachidonoyl lysophopholipids to prostanoid lysophopholipids, which are then hydrolyzed by intracellular phospholipases to release free prostanoids. Metabolizes 2-arachidonoyl glycerol yielding the glyceryl ester of PGH2, a process that can contribute to pain response. Generates lipid mediators from n-3 and n-6 polyunsaturated fatty acids (PUFAs) via a lipoxygenase-type mechanism. Oxygenates PUFAs to hydroperoxy compounds and then reduces them to corresponding alcohols. Plays a role in the generation of resolution phase interaction products (resolvins) during both sterile and infectious inflammation. Metabolizes docosahexaenoate (DHA, C22:6(n-3)) to 17R-HDHA, a precursor of the D-series resolvins (RvDs). As a component of the biosynthetic pathway of E-series resolvins (RvEs), converts eicosapentaenoate (EPA, C20:5(n-3)) primarily to 18S-HEPE that is further metabolized by ALOX5 and LTA4H to generate 18S-RvE1 and 18S-RvE2. In vascular endothelial cells, converts docosapentaenoate (DPA, C22:5(n-3)) to 13R-HDPA, a precursor for 13-series resolvins (RvTs) shown to activate macrophage phagocytosis during bacterial infection. In activated leukocytes, contributes to oxygenation of hydroxyeicosatetraenoates (HETE) to diHETES (5,15-diHETE and 5,11-diHETE). Can also use linoleate (LA, (9Z,12Z)-octadecadienoate, C18:2(n-6)) as substrate and produce hydroxyoctadecadienoates (HODEs) in a regio- and stereospecific manner, being (9R)-HODE ((9R)-hydroxy-(10E,12Z)-octadecadienoate) and (13S)-HODE ((13S)-hydroxy-(9Z,11E)-octadecadienoate) its major products. During neuroinflammation, plays a role in neuronal secretion of specialized preresolving mediators (SPMs) 15R-lipoxin A4 that regulates phagocytic microglia. The protein is Prostaglandin G/H synthase 2 of Homo sapiens (Human).